The chain runs to 213 residues: Ribonuclease HII (213 aa).

An RNase H type-2 domain is found at 18 to 213 (GLHAGVDEVG…RPVKERLAKR (196 aa)). Positions 24, 25, and 116 each coordinate a divalent metal cation.

Belongs to the RNase HII family. Mn(2+) serves as cofactor. Mg(2+) is required as a cofactor.

It is found in the cytoplasm. The enzyme catalyses Endonucleolytic cleavage to 5'-phosphomonoester.. Endonuclease that specifically degrades the RNA of RNA-DNA hybrids. This chain is Ribonuclease HII, found in Shewanella woodyi (strain ATCC 51908 / MS32).